The chain runs to 185 residues: Ubiquitin-fold modifier-conjugating enzyme 1 (185 aa).

C119 acts as the Glycyl thioester intermediate in catalysis.

The protein belongs to the ubiquitin-conjugating enzyme family. UFC1 subfamily.

In terms of biological role, E2-like enzyme which forms an intermediate with UFM1 via a thioester linkage. The sequence is that of Ubiquitin-fold modifier-conjugating enzyme 1 from Oryza sativa subsp. japonica (Rice).